Consider the following 258-residue polypeptide: Imidazole glycerol phosphate synthase subunit HisF (258 aa).

Catalysis depends on residues Asp-11 and Asp-130.

It belongs to the HisA/HisF family. In terms of assembly, heterodimer of HisH and HisF.

The protein localises to the cytoplasm. The enzyme catalyses 5-[(5-phospho-1-deoxy-D-ribulos-1-ylimino)methylamino]-1-(5-phospho-beta-D-ribosyl)imidazole-4-carboxamide + L-glutamine = D-erythro-1-(imidazol-4-yl)glycerol 3-phosphate + 5-amino-1-(5-phospho-beta-D-ribosyl)imidazole-4-carboxamide + L-glutamate + H(+). It participates in amino-acid biosynthesis; L-histidine biosynthesis; L-histidine from 5-phospho-alpha-D-ribose 1-diphosphate: step 5/9. Its function is as follows. IGPS catalyzes the conversion of PRFAR and glutamine to IGP, AICAR and glutamate. The HisF subunit catalyzes the cyclization activity that produces IGP and AICAR from PRFAR using the ammonia provided by the HisH subunit. This Xanthomonas campestris pv. campestris (strain 8004) protein is Imidazole glycerol phosphate synthase subunit HisF.